The primary structure comprises 141 residues: MKTARRRSRELAVQAVYQSLINRTAAPEIAKNIREMSDFAKADEELFNKLFFGTQTNAADYIQKIRPLLDRDEKDLNPIERAVLLTACHELSAMPETPYPVIINEAIEVTKTFGGTDGHKFVNGILDKLAAQIRPDEPKRR.

This sequence belongs to the NusB family.

Its function is as follows. Involved in transcription antitermination. Required for transcription of ribosomal RNA (rRNA) genes. Binds specifically to the boxA antiterminator sequence of the ribosomal RNA (rrn) operons. The polypeptide is Transcription antitermination protein NusB (Neisseria gonorrhoeae (strain ATCC 700825 / FA 1090)).